The primary structure comprises 217 residues: Small ribosomal subunit protein uS3 (217 aa).

The KH type-2 domain occupies 38–106 (IRKFVQKELA…QVHINIIEIK (69 aa)).

The protein belongs to the universal ribosomal protein uS3 family. Part of the 30S ribosomal subunit. Forms a tight complex with proteins S10 and S14.

Binds the lower part of the 30S subunit head. Binds mRNA in the 70S ribosome, positioning it for translation. The sequence is that of Small ribosomal subunit protein uS3 from Streptococcus pneumoniae serotype 19F (strain G54).